A 179-amino-acid chain; its full sequence is Inner membrane-spanning protein YciB (179 aa).

The next 5 helical transmembrane spans lie at 22-42 (IYVA…FTWF), 50-70 (MTLI…VFHN), 76-96 (WKVT…QLVL), 121-141 (LAWA…AFWL), and 149-169 (FKVF…GVYI).

Belongs to the YciB family.

The protein localises to the cell inner membrane. Its function is as follows. Plays a role in cell envelope biogenesis, maintenance of cell envelope integrity and membrane homeostasis. The chain is Inner membrane-spanning protein YciB from Serratia proteamaculans (strain 568).